The following is a 179-amino-acid chain: uncharacterized protein (179 aa).

Residues 5-25 form a helical membrane-spanning segment; it reads MLAGIGIGVAAALGVAAVASL.

To Rickettsia 17 kDa surface antigen.

The protein localises to the membrane. This is an uncharacterized protein from Escherichia coli O6:H1 (strain CFT073 / ATCC 700928 / UPEC).